The chain runs to 152 residues: Small ribosomal subunit protein uS15 (152 aa).

A compositionally biased stretch (basic residues) spans 1–11; that stretch reads MAKMHTKRKGK. Residues 1–22 form a disordered region; that stretch reads MAKMHTKRKGKSSSTRPIRTEP.

It belongs to the universal ribosomal protein uS15 family. As to quaternary structure, part of the 30S ribosomal subunit.

The protein is Small ribosomal subunit protein uS15 of Methanosarcina barkeri (strain Fusaro / DSM 804).